A 48-amino-acid polypeptide reads, in one-letter code: Large ribosomal subunit protein bL33B (48 aa).

The protein belongs to the bacterial ribosomal protein bL33 family.

This Mycoplasmoides gallisepticum (strain R(low / passage 15 / clone 2)) (Mycoplasma gallisepticum) protein is Large ribosomal subunit protein bL33B (rpmG 2).